Reading from the N-terminus, the 155-residue chain is Ribonuclease H (155 aa).

Positions 1–142 constitute an RNase H type-1 domain; that stretch reads MLKQVEIFTD…CDELARAAAS (142 aa). Asp10, Glu48, Asp70, and Asp134 together coordinate Mg(2+).

The protein belongs to the RNase H family. In terms of assembly, monomer. Mg(2+) serves as cofactor.

It localises to the cytoplasm. It catalyses the reaction Endonucleolytic cleavage to 5'-phosphomonoester.. Endonuclease that specifically degrades the RNA of RNA-DNA hybrids. The polypeptide is Ribonuclease H (Klebsiella pneumoniae (strain 342)).